The following is a 203-amino-acid chain: Small ribosomal subunit protein uS10m (203 aa).

The transit peptide at 1–14 directs the protein to the mitochondrion; it reads MLRNTIALRSFIRT. Residue S193 is modified to Phosphoserine.

The protein belongs to the universal ribosomal protein uS10 family. Component of the mitochondrial small ribosomal subunit (mt-SSU). Mature yeast 74S mitochondrial ribosomes consist of a small (37S) and a large (54S) subunit. The 37S small subunit contains a 15S ribosomal RNA (15S mt-rRNA) and 34 different proteins. The 54S large subunit contains a 21S rRNA (21S mt-rRNA) and 46 different proteins.

The protein resides in the mitochondrion. Its function is as follows. Component of the mitochondrial ribosome (mitoribosome), a dedicated translation machinery responsible for the synthesis of mitochondrial genome-encoded proteins, including at least some of the essential transmembrane subunits of the mitochondrial respiratory chain. The mitoribosomes are attached to the mitochondrial inner membrane and translation products are cotranslationally integrated into the membrane. In Saccharomyces cerevisiae (strain ATCC 204508 / S288c) (Baker's yeast), this protein is Small ribosomal subunit protein uS10m (RSM10).